The chain runs to 159 residues: MAQGGEINNDNEKPIFAVLTQYLKDLSFENPNAPRSLRPREKSPKIDININVDANPVGDDNYDVVLSLSVKADDDNDILFHVELVYGGVFHIQNIPQEHIMPLVFIECPRLLFPFVRQIISDATQNGGFPPLWIDPIDFVTLFQRRITAEQKDKPTQSS.

The protein belongs to the SecB family. As to quaternary structure, homotetramer, a dimer of dimers. One homotetramer interacts with 1 SecA dimer.

It localises to the cytoplasm. Functionally, one of the proteins required for the normal export of preproteins out of the cell cytoplasm. It is a molecular chaperone that binds to a subset of precursor proteins, maintaining them in a translocation-competent state. It also specifically binds to its receptor SecA. This Bartonella bacilliformis (strain ATCC 35685 / KC583 / Herrer 020/F12,63) protein is Protein-export protein SecB.